Here is a 635-residue protein sequence, read N- to C-terminus: Phosphatidylserine decarboxylase proenzyme 2 (635 aa).

The 127-residue stretch at 20-146 (KLQKFRIHRR…VVQEPESTCK (127 aa)) folds into the C2 domain. 2 EF-hand domains span residues 174 to 209 (TERR…FGNL) and 210 to 245 (VAAN…QQEQ). Residues Asp-187, Asn-189, Asp-191, Gln-193, Glu-198, Asp-223, Asn-225, Asp-227, and Glu-234 each coordinate Ca(2+). Catalysis depends on charge relay system; for autoendoproteolytic cleavage activity residues Asp-443, His-499, and Ser-587. The active-site Schiff-base intermediate with substrate; via pyruvic acid; for decarboxylase activity is the Ser-587. Ser-587 carries the pyruvic acid (Ser); by autocatalysis modification.

The protein belongs to the phosphatidylserine decarboxylase family. PSD-B subfamily. Eukaryotic type II sub-subfamily. As to quaternary structure, heterodimer of a large membrane-associated beta subunit and a small pyruvoyl-containing alpha subunit. It depends on pyruvate as a cofactor. Is synthesized initially as an inactive proenzyme. Formation of the active enzyme involves a self-maturation process in which the active site pyruvoyl group is generated from an internal serine residue via an autocatalytic post-translational modification. Two non-identical subunits are generated from the proenzyme in this reaction, and the pyruvate is formed at the N-terminus of the alpha chain, which is derived from the carboxyl end of the proenzyme. The autoendoproteolytic cleavage occurs by a canonical serine protease mechanism, in which the side chain hydroxyl group of the serine supplies its oxygen atom to form the C-terminus of the beta chain, while the remainder of the serine residue undergoes an oxidative deamination to produce ammonia and the pyruvoyl prosthetic group on the alpha chain. During this reaction, the Ser that is part of the protease active site of the proenzyme becomes the pyruvoyl prosthetic group, which constitutes an essential element of the active site of the mature decarboxylase. In terms of tissue distribution, highly expressed in flowers and at lower levels in leaves.

Its subcellular location is the vacuole membrane. The enzyme catalyses a 1,2-diacyl-sn-glycero-3-phospho-L-serine + H(+) = a 1,2-diacyl-sn-glycero-3-phosphoethanolamine + CO2. The protein operates within phospholipid metabolism; phosphatidylethanolamine biosynthesis; phosphatidylethanolamine from CDP-diacylglycerol: step 2/2. In terms of biological role, catalyzes the formation of phosphatidylethanolamine (PtdEtn) from phosphatidylserine (PtdSer). Plays a central role in phospholipid metabolism and in the interorganelle trafficking of phosphatidylserine. Contributes only to a minor proportion of PtdEtn production. This is Phosphatidylserine decarboxylase proenzyme 2 (PSD2) from Arabidopsis thaliana (Mouse-ear cress).